Consider the following 87-residue polypeptide: MEVLMMEERIYTIPLRDVINKSVRTKRAPRAIKKIKQFLKRHMKAEIVKIDNELNEKIWERGIQKPPARVRVKAVKEGNVVIATLAE.

It belongs to the eukaryotic ribosomal protein eL31 family.

This Methanocaldococcus jannaschii (strain ATCC 43067 / DSM 2661 / JAL-1 / JCM 10045 / NBRC 100440) (Methanococcus jannaschii) protein is Large ribosomal subunit protein eL31 (rpl31e).